The chain runs to 140 residues: PDZ domain-containing protein 11 (140 aa).

The PDZ domain maps to 47–129 (IVTLKKPPGA…ISMRVRFFPY (83 aa)).

Interacts with ATP2B1, ATP2B2, ATP2B3, ATP2B4 and ATP7A. Interacts with PLEKHA7 (via WW domains) at zonula adherens; this interaction is essential for the interaction between PLEKHA7 and the ADAM10-binding protein TSPAN33. Interacts with SLC5A6.

It localises to the cytoplasm. It is found in the cell junction. The protein resides in the adherens junction. The protein localises to the cell membrane. Functionally, mediates docking of ADAM10 to zonula adherens by interacting with PLEKHA7 which is required for PLEKHA7 to interact with the ADAM10-binding protein TSPAN33. In Mus musculus (Mouse), this protein is PDZ domain-containing protein 11 (Pdzd11).